The following is a 221-amino-acid chain: UPF0502 protein PLES_16071 (221 aa).

This sequence belongs to the UPF0502 family.

This chain is UPF0502 protein PLES_16071, found in Pseudomonas aeruginosa (strain LESB58).